A 183-amino-acid chain; its full sequence is Putative ribosomal N-acetyltransferase YdaF (183 aa).

Positions isoleucine 10 to lysine 176 constitute an N-acetyltransferase domain.

The protein belongs to the acetyltransferase family. As to quaternary structure, homohexamer, and homodimer.

Functionally, putative N-acetyltransferase. May act on ribosomal proteins (Potential). The chain is Putative ribosomal N-acetyltransferase YdaF (ydaF) from Bacillus subtilis (strain 168).